Consider the following 705-residue polypeptide: Elongation factor G (705 aa).

The tr-type G domain occupies 7 to 287 (HLTRNIGIMA…YVCAFLPSPL (281 aa)). Residues 16–23 (AHIDAGKT), 84–88 (DTPGH), and 138–141 (NKMD) contribute to the GTP site.

Belongs to the TRAFAC class translation factor GTPase superfamily. Classic translation factor GTPase family. EF-G/EF-2 subfamily.

It localises to the cytoplasm. Catalyzes the GTP-dependent ribosomal translocation step during translation elongation. During this step, the ribosome changes from the pre-translocational (PRE) to the post-translocational (POST) state as the newly formed A-site-bound peptidyl-tRNA and P-site-bound deacylated tRNA move to the P and E sites, respectively. Catalyzes the coordinated movement of the two tRNA molecules, the mRNA and conformational changes in the ribosome. The protein is Elongation factor G of Bacteroides thetaiotaomicron (strain ATCC 29148 / DSM 2079 / JCM 5827 / CCUG 10774 / NCTC 10582 / VPI-5482 / E50).